The primary structure comprises 140 residues: ATP synthase epsilon chain (140 aa).

The protein belongs to the ATPase epsilon chain family. As to quaternary structure, F-type ATPases have 2 components, CF(1) - the catalytic core - and CF(0) - the membrane proton channel. CF(1) has five subunits: alpha(3), beta(3), gamma(1), delta(1), epsilon(1). CF(0) has three main subunits: a, b and c.

Its subcellular location is the cell inner membrane. In terms of biological role, produces ATP from ADP in the presence of a proton gradient across the membrane. The protein is ATP synthase epsilon chain of Vibrio parahaemolyticus serotype O3:K6 (strain RIMD 2210633).